We begin with the raw amino-acid sequence, 36 residues long: Asteropin-A (36 aa).

Disulfide bonds link C2–C18, C9–C25, and C17–C35.

Sialidase inhibitor. Competitively inhibits bacterial sialidases, but not viral sialidases. Does not inhibit glycosidases or proteases. Has no antitumor activity. This is Asteropin-A from Asteropus simplex (Marine sponge).